Here is a 562-residue protein sequence, read N- to C-terminus: MSFMNPVDMVDEDAADLQFPKVALLHIFTTLNCLFAVEPLGPQVKRFIHAHQNEHTRNSMVLYNPHTLHRYLEEMEEKTRDQNSSVPSATKDANRCATCRCSLTEPYIKCSECLDTLLCLQCFSRGKEAFSHRNNHAYIIVRDNIQVFADEPHWTARDERILLKTLRTHGYGNWEAVSQALDQRHEPAEVRRHYHDCYFGGIFERLLNLKHARDSYVPERMPYVFKMRSLDPPRHDDIASMQFRLSAGYRCARGDFDTPYDTSAESLLSIMVDHRGRDDDNEASESEFEREVTEELQLGLVRAYNNRLRERQRRYKIMRQHGLIMPNRTVSWISKYVHAFGSDASCMRFLGFMQICPDPIKFDMLLESLRYYRELHSQLHKLYDLREHGVRTLSGAKLYARLSKERQQAQRDYSRLKQTDAFDWQQLVQHYESNRSGDPGPLAINSKLYVMNTRRKASPIEIGGGKHFTHCLTPTEYNFSLIPDLPGYSKLDDGERKLCSVARLVPQSYLDYKNQLVTEQAKLGYLRLADARRLIKIDVNKTRQIYDFLLEHGHISRPPSYG.

Residues 91 to 146 (KDANRCATCRCSLTEPYIKCSECLDTLLCLQCFSRGKEAFSHRNNHAYIIVRDNIQ) form a ZZ-type zinc finger. The Zn(2+) site is built by C96, C99, C110, C113, C119, C122, H132, and H136. One can recognise an SANT domain in the interval 154-198 (WTARDERILLKTLRTHGYGNWEAVSQALDQRHEPAEVRRHYHDCY). The SWIRM domain maps to 471-562 (CLTPTEYNFS…GHISRPPSYG (92 aa)).

As to quaternary structure, component of the Ada2a-containing (ATAC) complex composed of at least Ada2a, Atac1, Hcf, Ada3, Gcn5, Mocs2B, Charac-14, Atac3, Atac2, NC2beta and wds. Component of a complex that does not include Gcn5 or Ada3.

The protein localises to the nucleus. The protein resides in the chromosome. Functionally, component of the histone acetyltransferase (HAT) complex ATAC; predominantly involved in acetylation of histone H4, including at Lys-6 (H4K5ac) and Lys-13 (H4K12ac). May be part of several different complexes, including Gcn5-independent complexes involved in RNA polymerase II-dependent transcription. This Drosophila melanogaster (Fruit fly) protein is Transcriptional adapter 2A.